The following is a 468-amino-acid chain: GTPase Der (468 aa).

EngA-type G domains follow at residues 3 to 167 (PTLV…PYAE) and 179 to 352 (PVIA…TAAM). Residues 9 to 16 (GRPNVGKS), 56 to 60 (DTGGF), 119 to 122 (NKAE), 185 to 192 (GRPNVGKS), 232 to 236 (DTAGL), and 297 to 300 (NKWD) contribute to the GTP site. The KH-like domain maps to 353–437 (AHIPTPKLTR…PLRVEFRTGH (85 aa)). The disordered stretch occupies residues 434-468 (RTGHNPYAGKKAPPLTEEEARRAHSRRRRNRKKYG). The span at 456–468 (AHSRRRRNRKKYG) shows a compositional bias: basic residues.

It belongs to the TRAFAC class TrmE-Era-EngA-EngB-Septin-like GTPase superfamily. EngA (Der) GTPase family. Associates with the 50S ribosomal subunit.

Functionally, GTPase that plays an essential role in the late steps of ribosome biogenesis. The chain is GTPase Der from Nitrosomonas eutropha (strain DSM 101675 / C91 / Nm57).